The chain runs to 116 residues: NADH-ubiquinone oxidoreductase chain 3 (116 aa).

3 helical membrane passes run 3–23 (LITTIIAITITLSAVLATVSF), 56–76 (FFLIAILFLLFDLEIALLLPL), and 85–105 (PALTLAWSAAVLALLTLGLIY).

The protein belongs to the complex I subunit 3 family.

Its subcellular location is the mitochondrion membrane. The enzyme catalyses a ubiquinone + NADH + 5 H(+)(in) = a ubiquinol + NAD(+) + 4 H(+)(out). Its function is as follows. Core subunit of the mitochondrial membrane respiratory chain NADH dehydrogenase (Complex I) that is believed to belong to the minimal assembly required for catalysis. Complex I functions in the transfer of electrons from NADH to the respiratory chain. The immediate electron acceptor for the enzyme is believed to be ubiquinone. This Salmo trutta (Brown trout) protein is NADH-ubiquinone oxidoreductase chain 3 (MT-ND3).